The primary structure comprises 148 residues: Lysozyme C (148 aa).

A signal peptide spans 1 to 18 (MKALLLLGLLLLSVTVQG). The region spanning 19-148 (KIFERCDLAR…VSQYVRNCGV (130 aa)) is the C-type lysozyme domain. 4 disulfides stabilise this stretch: Cys24–Cys146, Cys48–Cys134, Cys83–Cys99, and Cys95–Cys113. Active-site residues include Glu53 and Asp71.

This sequence belongs to the glycosyl hydrolase 22 family. Monomer.

It catalyses the reaction Hydrolysis of (1-&gt;4)-beta-linkages between N-acetylmuramic acid and N-acetyl-D-glucosamine residues in a peptidoglycan and between N-acetyl-D-glucosamine residues in chitodextrins.. Functionally, lysozymes have primarily a bacteriolytic function; those in tissues and body fluids are associated with the monocyte-macrophage system and enhance the activity of immunoagents. The polypeptide is Lysozyme C (LYZ) (Halichoerus grypus (Gray seal)).